Consider the following 262-residue polypeptide: Tryptophan synthase alpha chain (262 aa).

Residues glutamate 49 and aspartate 60 each act as proton acceptor in the active site.

Belongs to the TrpA family. In terms of assembly, tetramer of two alpha and two beta chains.

It catalyses the reaction (1S,2R)-1-C-(indol-3-yl)glycerol 3-phosphate + L-serine = D-glyceraldehyde 3-phosphate + L-tryptophan + H2O. Its pathway is amino-acid biosynthesis; L-tryptophan biosynthesis; L-tryptophan from chorismate: step 5/5. Its function is as follows. The alpha subunit is responsible for the aldol cleavage of indoleglycerol phosphate to indole and glyceraldehyde 3-phosphate. The sequence is that of Tryptophan synthase alpha chain from Thermoanaerobacter pseudethanolicus (strain ATCC 33223 / 39E) (Clostridium thermohydrosulfuricum).